The sequence spans 430 residues: Putative chloroquine resistance transporter (430 aa).

The tract at residues 1–22 (MLKEGSSLDLSASSSSGTLRSD) is disordered. The Cytoplasmic segment spans residues 1-53 (MLKEGSSLDLSASSSSGTLRSDNSFGNSPLDRITSLLILIYKSIRACFKWIYS). Residues 7-21 (SLDLSASSSSGTLRS) show a composition bias toward low complexity. Residues 54 to 74 (KSFGIICILFVILDVLTTVFF) form a helical membrane-spanning segment. The Vacuolar portion of the chain corresponds to 75-88 (KRFIDHTKNYVMFT). Residues 89–109 (IQVIIFTFWIIVCCIAILCFL) traverse the membrane as a helical segment. Topologically, residues 110-122 (FNREYMKRHFNVR) are cytoplasmic. Residues 123-143 (PLVFLGFLDMLSTGLSANGSA) form a helical membrane-spanning segment. Topologically, residues 144–147 (HTSG) are vacuolar. The helical transmembrane segment at 148–168 (LMLVLLGQISVPLTMVSCKLI) threads the bilayer. Residues 169–173 (LSKKY) lie on the Cytoplasmic side of the membrane. Residues 174–194 (HHYQYISSAIILTFAVLKPIL) form a helical membrane-spanning segment. Asn195 carries an N-linked (GlcNAc...) asparagine glycan. Over 195–206 (NRTDTTDNRFYN) the chain is Vacuolar. The helical transmembrane segment at 207–223 (NMLYLLASVPDSIASAL) threads the bilayer. At 224-239 (REKQYTSKFFHVVKYQ) the chain is on the cytoplasmic side. A helical transmembrane segment spans residues 240–260 (FFGFLFHFFYNILYTLLFTLP). The Vacuolar segment spans residues 261-306 (FNSVKGYFDSLYKLCVNGYKCIFFGVNTITENCGPTLIPTCDNCLE). Disulfide bonds link Cys281-Cys304 and Cys293-Cys301. A helical transmembrane segment spans residues 307–329 (AFKIYCLYILFSSAIRVAYVFIM). Topologically, residues 330–335 (LDGSVT) are cytoplasmic. The helical transmembrane segment at 336–358 (FTLLLGTVKVPLTSIAFSLRFIA) threads the bilayer. Over 359-364 (GDSTTS) the chain is Vacuolar. The chain crosses the membrane as a helical span at residues 365-385 (FNLLDVVCFLGIVAGLLLYAL). The Cytoplasmic portion of the chain corresponds to 386-430 (GSKKIQEETDLLESPLIDDAESEHELLSTGTEKLMRSEICHDLFT).

This sequence belongs to the CRT-like transporter family.

The protein localises to the vacuole membrane. Functionally, nutrient transporter. Involved in maintaining the osmotic homeostasis of the digestive vacuole. The sequence is that of Putative chloroquine resistance transporter from Theileria annulata.